We begin with the raw amino-acid sequence, 345 residues long: MRVSGALFLQFLLLVVPHISCWNDEAVLLRDVQVLTLYRGRYTTARRSSPVPQLQCIGGSAGCGSFTPEVVQCYNRGSDGIDAQWECKADMDNLYRFGRVEVSCEGYNSPNDAYVLRGSCGLEYTLELTAEGKQQQGSSGFSGFASNFFQGFSNQKQQQRGGGGDGGGPYQQHSYQNSPSGDGVGGLLVVAFLLLVAFVVYKMFLCSPTNGHQGFGGDQGYDSTNGAWDNSQGMGPPPPGFKPDYYSGDHSNSRPGYGFSDSYTRPQSSWTGFTGRTRPGGGGGGGGGFWTGMGTGGILGYLFGNQRRQPPMGFAGPTYNSNPSPAPKTSSGTRTASGFGTTKRR.

An N-terminal signal peptide occupies residues 1 to 21 (MRVSGALFLQFLLLVVPHISC). The Lumenal portion of the chain corresponds to 22-183 (WNDEAVLLRD…SYQNSPSGDG (162 aa)). The interval 155–178 (QKQQQRGGGGDGGGPYQQHSYQNS) is disordered. Gly residues predominate over residues 160–169 (RGGGGDGGGP). The helical transmembrane segment at 184 to 204 (VGGLLVVAFLLLVAFVVYKMF) threads the bilayer. Topologically, residues 205-345 (LCSPTNGHQG…ASGFGTTKRR (141 aa)) are cytoplasmic. Positions 223–233 (STNGAWDNSQG) are enriched in polar residues. Disordered stretches follow at residues 223-289 (STNG…GGGF) and 302-345 (LFGN…TKRR). The segment covering 278–289 (RPGGGGGGGGGF) has biased composition (gly residues). The span at 318 to 345 (TYNSNPSPAPKTSSGTRTASGFGTTKRR) shows a compositional bias: polar residues.

Belongs to the SARAF family.

Its subcellular location is the endoplasmic reticulum membrane. Its function is as follows. Negative regulator of store-operated Ca(2+) entry (SOCE) involved in protecting cells from Ca(2+) overfilling. In response to cytosolic Ca(2+) elevation after endoplasmic reticulum Ca(2+) refilling, promotes a slow inactivation of STIM (stim1 or stim2)-dependent SOCE activity. The protein is Store-operated calcium entry-associated regulatory factor (saraf) of Danio rerio (Zebrafish).